A 221-amino-acid polypeptide reads, in one-letter code: Protein myomaker (221 aa).

At 1-3 (MGT) the chain is on the extracellular side. A helical transmembrane segment spans residues 4–24 (LVAKLLLPTLSSLAFLPTVSI). The Cytoplasmic segment spans residues 25-34 (AAKRRFHMEA). A helical membrane pass occupies residues 35 to 55 (MVYLFTLFFVALHHACNGPGL). Over 56–64 (SVLCFMRHD) the chain is Extracellular. Residues 65-85 (ILEYFSVYGTALSMWVSLMAL) form a helical membrane-spanning segment. Residues 86-92 (ADFDEPK) are Cytoplasmic-facing. The chain crosses the membrane as a helical span at residues 93–110 (RSTFVMFGVLTIAVRIYH). Residues 111–113 (DRW) lie on the Extracellular side of the membrane. The chain crosses the membrane as a helical span at residues 114–134 (GYGVYSGPIGTAILIIAAKWL). Residues 135–153 (QKMKEKKGLYPDKSVYTQQ) lie on the Cytoplasmic side of the membrane. The chain crosses the membrane as a helical span at residues 154 to 174 (IGPGLCFGALALMLRFFFEDW). Residue aspartate 175 is a topological domain, extracellular. The helical transmembrane segment at 176–196 (YTYVHSFYHCALAMSFVLLLP) threads the bilayer. At 197–221 (KVNKKAGSPGTPAKLDCSTLCCACV) the chain is on the cytoplasmic side. 2 S-palmitoyl cysteine lipidation sites follow: cysteine 217 and cysteine 218.

Belongs to the TMEM8 family. As to quaternary structure, interacts with MYMX. Palmitoylated at the C-terminus; palmitoylation promotes localization to the Golgi apparatus.

The protein localises to the cell membrane. It is found in the golgi apparatus membrane. Myoblast-specific protein that mediates myoblast fusion, an essential step for the formation of multi-nucleated muscle fibers. Actively participates in the membrane fusion reaction by mediating the mixing of cell membrane lipids (hemifusion) upstream of MYMX. Acts independently of MYMX. Involved in skeletal muscle regeneration in response to injury by mediating the fusion of satellite cells, a population of muscle stem cells, with injured myofibers. Also involved in skeletal muscle hypertrophy, probably by mediating the fusion of satellite cells with myofibers. The protein is Protein myomaker of Homo sapiens (Human).